Consider the following 94-residue polypeptide: Co-chaperonin GroES (94 aa).

It belongs to the GroES chaperonin family. As to quaternary structure, heptamer of 7 subunits arranged in a ring. Interacts with the chaperonin GroEL.

The protein resides in the cytoplasm. Together with the chaperonin GroEL, plays an essential role in assisting protein folding. The GroEL-GroES system forms a nano-cage that allows encapsulation of the non-native substrate proteins and provides a physical environment optimized to promote and accelerate protein folding. GroES binds to the apical surface of the GroEL ring, thereby capping the opening of the GroEL channel. This chain is Co-chaperonin GroES, found in Bacillus subtilis (strain 168).